A 223-amino-acid chain; its full sequence is MQYPINEMFQTLQGEGYFTGVPAIFIRLQGCPVGCAWCDTKHTWEKLEDREVSLFSILAKTKESDKWGAASSEDLLAVIGRQGYTARHVVITGGEPCIHDLLPLTDLLEKNGFSCQIETSGTHEVRCTPNTWVTVSPKLNMRGGYEVLSQALERANEIKHPVGRVRDIEALDELLATLTDDKPRVIALQPISQKDDATRLCIETCIARNWRLSMQTHKYLNIA.

Substrate-binding positions include 12–14 and arginine 27; that span reads LQG. The region spanning 18–223 is the Radical SAM core domain; it reads FTGVPAIFIR…MQTHKYLNIA (206 aa). [4Fe-4S] cluster is bound by residues cysteine 31, cysteine 35, and cysteine 38. Threonine 40 lines the Mg(2+) pocket. Residue threonine 92 participates in substrate binding. S-adenosyl-L-methionine is bound by residues glycine 94 and 136–138; that span reads SPK.

This sequence belongs to the radical SAM superfamily. 7-carboxy-7-deazaguanine synthase family. As to quaternary structure, homodimer. [4Fe-4S] cluster is required as a cofactor. S-adenosyl-L-methionine serves as cofactor. The cofactor is Mg(2+).

The enzyme catalyses 6-carboxy-5,6,7,8-tetrahydropterin + H(+) = 7-carboxy-7-deazaguanine + NH4(+). The protein operates within purine metabolism; 7-cyano-7-deazaguanine biosynthesis. Catalyzes the complex heterocyclic radical-mediated conversion of 6-carboxy-5,6,7,8-tetrahydropterin (CPH4) to 7-carboxy-7-deazaguanine (CDG), a step common to the biosynthetic pathways of all 7-deazapurine-containing compounds. This is 7-carboxy-7-deazaguanine synthase from Escherichia coli (strain K12).